A 342-amino-acid polypeptide reads, in one-letter code: Ribosomal RNA small subunit methyltransferase H (342 aa).

Residues 36–38 (GGH), aspartate 56, phenylalanine 82, aspartate 100, and glutamine 107 each bind S-adenosyl-L-methionine. The segment at 309–342 (ENRESGMGKGHGAAASRFPTPDSRFPTSPNGDAP) is disordered. A compositionally biased stretch (polar residues) spans 333 to 342 (FPTSPNGDAP).

The protein belongs to the methyltransferase superfamily. RsmH family.

The protein localises to the cytoplasm. It carries out the reaction cytidine(1402) in 16S rRNA + S-adenosyl-L-methionine = N(4)-methylcytidine(1402) in 16S rRNA + S-adenosyl-L-homocysteine + H(+). Specifically methylates the N4 position of cytidine in position 1402 (C1402) of 16S rRNA. This Xanthomonas campestris pv. campestris (strain 8004) protein is Ribosomal RNA small subunit methyltransferase H.